The sequence spans 577 residues: DNA-directed RNA polymerase subunit alpha (577 aa).

The tract at residues 1–461 (MIKIIIKETF…QLFLPLQQIR (461 aa)) is alpha N-terminal domain (alpha-NTD). Positions 510–577 (FDHRLLELDI…ALQLMKLTLK (68 aa)) are alpha C-terminal domain (alpha-CTD).

The protein belongs to the RNA polymerase alpha chain family. In plastids the minimal PEP RNA polymerase catalytic core is composed of four subunits: alpha, beta, beta', and beta''. When a (nuclear-encoded) sigma factor is associated with the core the holoenzyme is formed, which can initiate transcription.

The protein resides in the plastid. It localises to the chloroplast. It carries out the reaction RNA(n) + a ribonucleoside 5'-triphosphate = RNA(n+1) + diphosphate. In terms of biological role, DNA-dependent RNA polymerase catalyzes the transcription of DNA into RNA using the four ribonucleoside triphosphates as substrates. This chain is DNA-directed RNA polymerase subunit alpha, found in Tupiella akineta (Green alga).